An 80-amino-acid polypeptide reads, in one-letter code: Serine palmitoyltransferase small subunit A-B (80 aa).

Over M1–H21 the chain is Cytoplasmic. A helical transmembrane segment spans residues V22–L38. The Lumenal portion of the chain corresponds to E39–R43. Residues T44–P66 traverse the membrane as a helical segment. Over Q67–Q80 the chain is Cytoplasmic.

Belongs to the SPTSS family. SPTSSA subfamily. In terms of assembly, component of the serine palmitoyltransferase (SPT) complex, which is composed of SPTLC1, SPTLC2 or SPTLC3 and SPTSSA or SPTSSB. The heterodimer consisting of SPTLC1 and SPTLC2/SPTLC3 forms the catalytic core of the enzyme, while SPTSSA or SPTSSB subunits determine substrate specificity. SPT also interacts with ORMDL proteins, especially ORMDL3, which negatively regulate SPT activity in the presence of ceramides.

The protein resides in the endoplasmic reticulum membrane. It functions in the pathway lipid metabolism; sphingolipid metabolism. Component of the serine palmitoyltransferase multisubunit enzyme (SPT) that catalyzes the initial and rate-limiting step in sphingolipid biosynthesis by condensing L-serine and activated acyl-CoA (most commonly palmitoyl-CoA) to form long-chain bases. The SPT complex is composed of SPTLC1, SPTLC2 or SPTLC3 and SPTSSA or SPTSSB. Within this complex, the heterodimer consisting of SPTLC1 and SPTLC2/SPTLC3 forms the catalytic core. Within the SPT complex, SPTSSA stimulates the catalytic activity and plays a role in substrate specificity, which depends upon the overall complex composition. The SPTLC1-SPTLC2-SPTSSA complex shows a strong preference for C16-CoA substrate, while the SPTLC1-SPTLC3-SPTSSA isozyme uses both C14-CoA and C16-CoA as substrates, with a slight preference for C14-CoA. Independently of its action as a SPT component, may be involved in MBOAT7 localization to mitochondria-associated membranes, a membrane bridge between the endoplasmic reticulum and mitochondria, may hence affect MBOAT7-catalyzed incorporation of arachidonic acid into phosphatidylinositol. The polypeptide is Serine palmitoyltransferase small subunit A-B (sptssa-b) (Xenopus laevis (African clawed frog)).